Consider the following 949-residue polypeptide: Phosphocholine transferase AnkX (949 aa).

In terms of domain architecture, Fido spans 155–289 (LNPEQIPDLA…IFNTVEIIEQ (135 aa)). ANK repeat units follow at residues 391 to 420 (VGKT…DLSL), 424 to 453 (DGKT…SQED), 464 to 494 (HGKT…QINE), 498 to 527 (SGSS…DISD), 554 to 583 (LNKE…DIDI), 588 to 617 (DKAT…NTRL), 658 to 687 (NGNP…RVDF), 691 to 720 (LGNN…TLLH), 725 to 767 (ERRN…DLNK), and 771 to 800 (KGKT…HTNI).

Its subcellular location is the secreted. The protein resides in the host cytoplasm. The catalysed reaction is [Rab1 protein]-L-serine + CDP-choline = [Rab1 protein]-O-phosphocholine-L-serine + CMP + H(+). Virulence effector that plays a role in hijacking the host vesicular trafficking by recruiting the small guanosine triphosphatase (GTPase) Rab1 to the cytosolic face of the Legionella-containing vacuole (LCVs). Acts as a phosphocholine transferase by mediating the addition of phosphocholine to Ser residues of host RAB1 (RAB1A, RAB1B or RAB1C) and RAB35, leading to displacement of GDP dissociation inhibitors (GDI). Phosphocholination of target proteins also impairs accessibility to GTPase effector LepB. Can act on both GDP-bound and GTP-bound Rab proteins. The polypeptide is Phosphocholine transferase AnkX (ankX) (Legionella pneumophila subsp. pneumophila (strain Philadelphia 1 / ATCC 33152 / DSM 7513)).